A 156-amino-acid polypeptide reads, in one-letter code: Small ribosomal subunit protein uS7 (156 aa).

It belongs to the universal ribosomal protein uS7 family. As to quaternary structure, part of the 30S ribosomal subunit. Contacts proteins S9 and S11.

One of the primary rRNA binding proteins, it binds directly to 16S rRNA where it nucleates assembly of the head domain of the 30S subunit. Is located at the subunit interface close to the decoding center, probably blocks exit of the E-site tRNA. The sequence is that of Small ribosomal subunit protein uS7 from Lactobacillus johnsonii (strain CNCM I-12250 / La1 / NCC 533).